Here is a 110-residue protein sequence, read N- to C-terminus: UPF0213 protein DVU_3309 (110 aa).

The GIY-YIG domain occupies 8–83 (EVWFVYLLRC…KRQPTDQKLA (76 aa)).

This sequence belongs to the UPF0213 family.

This Nitratidesulfovibrio vulgaris (strain ATCC 29579 / DSM 644 / CCUG 34227 / NCIMB 8303 / VKM B-1760 / Hildenborough) (Desulfovibrio vulgaris) protein is UPF0213 protein DVU_3309.